The following is a 242-amino-acid chain: Lysosomal membrane ascorbate-dependent ferrireductase CYB561A3 (242 aa).

The Cytoplasmic portion of the chain corresponds to 1-7 (MVSGRFY). Residues 8-28 (LSCLLLGSLGSMCILFTIYWM) traverse the membrane as a helical segment. The Cytochrome b561 domain occupies 12–219 (LLGSLGSMCI…FGLLVLYILL (208 aa)). The Lumenal segment spans residues 29 to 45 (QYWRGGFAWNGSIYMFN). Residue N38 is glycosylated (N-linked (GlcNAc...) asparagine). The helical transmembrane segment at 46 to 66 (WHPVLMVAGMVVFYGGASLVY) threads the bilayer. Residues H47 and R67 each coordinate heme b. Residues 67 to 83 (RLPQSWVGPKLPWKLLH) are Cytoplasmic-facing. Residues K76 and K80 each coordinate L-ascorbate. H83 lines the heme b pocket. Residues 84–104 (AALHLMAFVLTVVGLVAVFTF) form a helical membrane-spanning segment. Residues 105–119 (HNHGRTANLYSLHSW) are Lumenal-facing. Heme b-binding positions include 112–115 (NLYS) and H117. Residues 120–140 (LGITTVFLFACQWFLGFAVFL) traverse the membrane as a helical segment. At 141–154 (LPWASMWLRSLLKP) the chain is on the cytoplasmic side. R149 serves as a coordination point for L-ascorbate. The chain crosses the membrane as a helical span at residues 155–175 (IHVFFGAAILSLSIASVISGI). Residues H156 and E177 each contribute to the heme b site. The Lumenal segment spans residues 176-202 (NEKLFFSLKNTTRPYHSLPSEAVFANS). Residues 203-223 (TGMLVVAFGLLVLYILLASSW) form a helical membrane-spanning segment. A heme b-binding site is contributed by K224. The Cytoplasmic segment spans residues 224–242 (KRPEPGILTDRQPLLHDGE).

As to quaternary structure, homodimer. Heme b is required as a cofactor. In terms of processing, N-glycosylated.

Its subcellular location is the late endosome membrane. The protein localises to the lysosome membrane. It carries out the reaction Fe(3+)(out) + L-ascorbate(in) = monodehydro-L-ascorbate radical(in) + Fe(2+)(out) + H(+). Transmembrane reductase that uses ascorbate as an electron donor in the cytoplasm and transfers electrons across membranes to reduce iron cations Fe(3+) into Fe(2+) in the lumen of the late endosome and lysosome. Reduced iron can then be extruded from the late endosome and lysosome to the cytoplasm by divalent metal-specific transporters. It is therefore most probably involved in endosomal and lysosomal cellular iron homeostasis. The chain is Lysosomal membrane ascorbate-dependent ferrireductase CYB561A3 from Homo sapiens (Human).